We begin with the raw amino-acid sequence, 345 residues long: Phosphate acyltransferase (345 aa).

The protein belongs to the PlsX family. Homodimer. Probably interacts with PlsY.

It is found in the cytoplasm. It catalyses the reaction a fatty acyl-[ACP] + phosphate = an acyl phosphate + holo-[ACP]. Its pathway is lipid metabolism; phospholipid metabolism. Its function is as follows. Catalyzes the reversible formation of acyl-phosphate (acyl-PO(4)) from acyl-[acyl-carrier-protein] (acyl-ACP). This enzyme utilizes acyl-ACP as fatty acyl donor, but not acyl-CoA. This Limosilactobacillus fermentum (strain NBRC 3956 / LMG 18251) (Lactobacillus fermentum) protein is Phosphate acyltransferase.